Here is a 122-residue protein sequence, read N- to C-terminus: Large ribosomal subunit protein uL18 (122 aa).

Belongs to the universal ribosomal protein uL18 family. In terms of assembly, part of the 50S ribosomal subunit; part of the 5S rRNA/L5/L18/L25 subcomplex. Contacts the 5S and 23S rRNAs.

Functionally, this is one of the proteins that bind and probably mediate the attachment of the 5S RNA into the large ribosomal subunit, where it forms part of the central protuberance. The chain is Large ribosomal subunit protein uL18 from Acetivibrio thermocellus (strain ATCC 27405 / DSM 1237 / JCM 9322 / NBRC 103400 / NCIMB 10682 / NRRL B-4536 / VPI 7372) (Clostridium thermocellum).